The following is a 155-amino-acid chain: MKLNELRDAEGATKARKRVGRGIGSGSGKTGGRGVKGQKSRSGVAIKGFEGGQMPLYRRLPKRGFTNIFGKDYNEVSLGRIQAAIDANKLDAAATIDGAALLNAGVIRRLKDGVRVLSGGEITAKVTLDVAGASKSAVEKIEKAGGSVKLPEKAA.

Residues 1 to 13 are compositionally biased toward basic and acidic residues; the sequence is MKLNELRDAEGAT. The interval 1–41 is disordered; sequence MKLNELRDAEGATKARKRVGRGIGSGSGKTGGRGVKGQKSR. A compositionally biased stretch (gly residues) spans 21-35; sequence RGIGSGSGKTGGRGV.

The protein belongs to the universal ribosomal protein uL15 family. As to quaternary structure, part of the 50S ribosomal subunit.

In terms of biological role, binds to the 23S rRNA. The chain is Large ribosomal subunit protein uL15 from Chelativorans sp. (strain BNC1).